The following is a 137-amino-acid chain: Large ribosomal subunit protein uL16 (137 aa).

This sequence belongs to the universal ribosomal protein uL16 family. As to quaternary structure, part of the 50S ribosomal subunit.

Functionally, binds 23S rRNA and is also seen to make contacts with the A and possibly P site tRNAs. The sequence is that of Large ribosomal subunit protein uL16 from Bradyrhizobium sp. (strain BTAi1 / ATCC BAA-1182).